Consider the following 492-residue polypeptide: Ketol-acid reductoisomerase (NADP(+)) (492 aa).

Residues 15 to 208 form the KARI N-terminal Rossmann domain; that stretch reads AQLGKCRFMA…GGHRAGVLES (194 aa). Residues 45 to 48, Arg-68, Arg-76, Ser-78, and 108 to 110 each bind NADP(+); these read CGAQ and DKQ. His-132 is an active-site residue. Gly-158 is an NADP(+) binding site. KARI C-terminal knotted domains are found at residues 209 to 344 and 345 to 485; these read SFVA…TAAQ and FEGK…MTDM. Mg(2+) contacts are provided by Asp-217, Glu-221, Glu-389, and Glu-393. Ser-414 contacts substrate.

It belongs to the ketol-acid reductoisomerase family. Requires Mg(2+) as cofactor.

The enzyme catalyses (2R)-2,3-dihydroxy-3-methylbutanoate + NADP(+) = (2S)-2-acetolactate + NADPH + H(+). It catalyses the reaction (2R,3R)-2,3-dihydroxy-3-methylpentanoate + NADP(+) = (S)-2-ethyl-2-hydroxy-3-oxobutanoate + NADPH + H(+). The protein operates within amino-acid biosynthesis; L-isoleucine biosynthesis; L-isoleucine from 2-oxobutanoate: step 2/4. Its pathway is amino-acid biosynthesis; L-valine biosynthesis; L-valine from pyruvate: step 2/4. Involved in the biosynthesis of branched-chain amino acids (BCAA). Catalyzes an alkyl-migration followed by a ketol-acid reduction of (S)-2-acetolactate (S2AL) to yield (R)-2,3-dihydroxy-isovalerate. In the isomerase reaction, S2AL is rearranged via a Mg-dependent methyl migration to produce 3-hydroxy-3-methyl-2-ketobutyrate (HMKB). In the reductase reaction, this 2-ketoacid undergoes a metal-dependent reduction by NADPH to yield (R)-2,3-dihydroxy-isovalerate. The chain is Ketol-acid reductoisomerase (NADP(+)) from Erwinia tasmaniensis (strain DSM 17950 / CFBP 7177 / CIP 109463 / NCPPB 4357 / Et1/99).